We begin with the raw amino-acid sequence, 454 residues long: Asparagine--tRNA ligase (454 aa).

This sequence belongs to the class-II aminoacyl-tRNA synthetase family. In terms of assembly, homodimer.

The protein localises to the cytoplasm. The enzyme catalyses tRNA(Asn) + L-asparagine + ATP = L-asparaginyl-tRNA(Asn) + AMP + diphosphate + H(+). The protein is Asparagine--tRNA ligase of Mycoplasma capricolum subsp. capricolum (strain California kid / ATCC 27343 / NCTC 10154).